Consider the following 384-residue polypeptide: 1-deoxy-D-xylulose 5-phosphate reductoisomerase (384 aa).

NADPH contacts are provided by Thr-10, Gly-11, Ser-12, Ile-13, Gly-36, Lys-37, Asn-38, and Asn-121. Lys-122 contacts 1-deoxy-D-xylulose 5-phosphate. Residue Glu-123 participates in NADPH binding. Residue Asp-147 participates in Mn(2+) binding. Residues Ser-148, Glu-149, Ser-173, and His-196 each contribute to the 1-deoxy-D-xylulose 5-phosphate site. Mn(2+) is bound at residue Glu-149. Residue Gly-202 coordinates NADPH. 4 residues coordinate 1-deoxy-D-xylulose 5-phosphate: Ser-209, Asn-214, Lys-215, and Glu-218. Glu-218 contacts Mn(2+).

Belongs to the DXR family. Mg(2+) is required as a cofactor. Requires Mn(2+) as cofactor.

The catalysed reaction is 2-C-methyl-D-erythritol 4-phosphate + NADP(+) = 1-deoxy-D-xylulose 5-phosphate + NADPH + H(+). It participates in isoprenoid biosynthesis; isopentenyl diphosphate biosynthesis via DXP pathway; isopentenyl diphosphate from 1-deoxy-D-xylulose 5-phosphate: step 1/6. Functionally, catalyzes the NADPH-dependent rearrangement and reduction of 1-deoxy-D-xylulose-5-phosphate (DXP) to 2-C-methyl-D-erythritol 4-phosphate (MEP). The sequence is that of 1-deoxy-D-xylulose 5-phosphate reductoisomerase from Exiguobacterium sibiricum (strain DSM 17290 / CCUG 55495 / CIP 109462 / JCM 13490 / 255-15).